Consider the following 254-residue polypeptide: tRNA (guanine-N(1)-)-methyltransferase (254 aa).

Residues Gly-117 and 136 to 141 (LGDFVL) each bind S-adenosyl-L-methionine.

Belongs to the RNA methyltransferase TrmD family. As to quaternary structure, homodimer.

The protein localises to the cytoplasm. The catalysed reaction is guanosine(37) in tRNA + S-adenosyl-L-methionine = N(1)-methylguanosine(37) in tRNA + S-adenosyl-L-homocysteine + H(+). Functionally, specifically methylates guanosine-37 in various tRNAs. The chain is tRNA (guanine-N(1)-)-methyltransferase from Levilactobacillus brevis (strain ATCC 367 / BCRC 12310 / CIP 105137 / JCM 1170 / LMG 11437 / NCIMB 947 / NCTC 947) (Lactobacillus brevis).